The primary structure comprises 82 residues: Omega-conotoxin-like TxMKLT1-031 (82 aa).

An N-terminal signal peptide occupies residues 1–22; sequence MKLTCMMIVAVLFLTAWTLVMA. Positions 23-49 are excised as a propeptide; sequence DDSNNGLANLFSKSRDEMEDPEASKLE. 3 disulfides stabilise this stretch: Cys-53–Cys-71, Cys-60–Cys-76, and Cys-70–Cys-81.

Belongs to the conotoxin O1 superfamily. As to expression, expressed by the venom duct.

Its subcellular location is the secreted. Its function is as follows. Omega-conotoxins act at presynaptic membranes, they bind and block voltage-gated calcium channels (Cav). The protein is Omega-conotoxin-like TxMKLT1-031 of Conus textile (Cloth-of-gold cone).